Reading from the N-terminus, the 290-residue chain is Type II secretion system protein C (290 aa).

Topologically, residues M1–P28 are cytoplasmic. Residues L29–W46 traverse the membrane as a helical segment. The Periplasmic portion of the chain corresponds to R47 to E290.

The protein belongs to the GSP C family.

Its subcellular location is the cell inner membrane. In terms of biological role, involved in a type II secretion system (T2SS, formerly general secretion pathway, GSP) for the export of proteins. The sequence is that of Type II secretion system protein C (exeC) from Aeromonas salmonicida.